Here is a 2598-residue protein sequence, read N- to C-terminus: MGSVYDSQSIAIVGLSCRLPGDADNAERFWNLMSEGRSAISSVPADRWNSKGFRDPTGKKRQNTSLTDRAHFVKGDISEFDANFFTISKAEADSMDPQQRIMLEVAYEAFENAGLSMDSLAKSQTGCWVSSFSQDWKEMHFSDPDAAPKYAMSGMQPELLSNRVSYFFDLQGPSMTIETACSGSLVGLHVACQSLRAGDCETALVGGANLFLNQNMFLALSNQSFLAPDGLCKAFDASANGYGRGEGFAAVILKPIEKAIRDGDHIRAVIRGTGTNQDGRTKGLTMPNGHAQESLIRSTYAAAGLDLKDTAYFEAHGTGTQAGDFEELGAISRTVADARQKAGLEDLWVGSAKTNIGHLEAVAGLVGVLKAVLVLENGVIPPNLHFKNPNPRIPFGKWRIKVPTERIQWPSDGIRRVSVNSFGFGGSNAHAILDDADQYLSGRGIIRANGKSHHHHHQHQQQQLNGGNGGSNGVNGTSEVNGTSGVNGTTTAITNGSTHVNGTAATAATAAAQQIIILNSYDQEGLGRQREALLRYAEKQQQQQQQQGGQGGADPEKLLGDLAFTLNQKRSRLPWRTFFTASTLPELSRALEAASTFPAIRSGAATPRIAYVFTGQGAQWAQMGMDLLRFHVFRESVEAADRHLTQIGCPWSAVEELQRGDAESNIHISWYSQTLCTVIQVALVQLLESWNVRPRSVVGHSSGEMGAAFAIGALSREDAWTIAYWRGKLSSELTTIAPTQKGAMMAVGASHAQAQAWVDGLTRGRCVVACVNSPSSVTVSGDESGLDELAAMLKEQGVFARKLKVSTAYHSHHMKAVAEAYLDALKGVRTRTVPAEGGAPQMFTSVSESLVDPAELGPAHWVANLISPVLFSNTVRELARPKGPDDEASGSAVDLMVEIGPHAALRGPVTQILQSHGLPALDYYSVLSRGANSVDTALAVVGELVCRGVPVDLGAVNRAHLTAEQQLQADRRPSLVAELPPYAWNHAKTYWSESRISRELKYRPAPQLGLIGAPMPNFAPNEHQWRGFLRLADAAWIRDHKIQSSVIFPAGGFLAMAVEAAAQLAAAAQQEQPDRVVKGYKLRSVDISSAVRVADDSSVECIIQLRLSPGGAAAAEAAETWWDFSISTSPNAGEALKRNCSGSVAVEFGALAIVDAAQASYASAASACTISQEVDVFYRQLDSVGLGYGPTFQAIKSILHDSRGQGCGVLEITETDSASPKDPDARPHVVHPTTLESLFQMAYAAFGGRDGRVKRALMVTQIDELLVDATIPFAPGSRLLTSASAARQGFREIKADAFMLEAASESPKMAVKGLVCVEMPSASGMGGGGGGGLDADQASYSAMLSKFVWKPALELLSAPEQAKLLEDATRLPEDEAQRLASEATAELHAVKAVLESAQSKKIANLKLRNAAKWISQQLQASGIPGKPAENGAREGGSSSGFTAEVEKVLSGLAEADVLLGSKGSADHLVAQLPGMKMSLEKMYKLVNYMAHANPNLTVLEIVPGGAGVDFSLPLSAKDIPSTIQYTYASPSADNVQQMQERLGGGSGDSALALALAPRFRVLEIEQDLADQGLDPGSFDIVIGCNLLSNAVNVEKTLSQAKSLLTEGGKMALVELNKPSPAALPVLGILCDWWKRRDDGLRRPFTTDMVNESLAGQGFAIELATPDFTDPALQQSSLVLASCQPASAGKESAAQEVVSILVRKDSSEAVNALASQLSQACNGAKTVTWEAGVDFKGQHLISLLEFDTPLLDRLTEEDFGLVKQLITQAASLQWVTAIPEPHASTVMGLARVARFEVPSLRFQTVTLDPSSVLALDRAATLIIQAQKKSTSQDKEFKEVDSVLHVPRVDIDAPLNEQVTRLLLEEDVEPMPLGSGDAARKLCIRNPGMLNTLCFEIDSLPSTVLAEDEVEMQVKASGLSPKDVAICLGQVSDTALGFEASGIVTRVGAGVAQFQAGDKICMMARGAHRTVLRSKSALCQRIPEGMSFEQAAAVPLAHGAVYHALVNIARARSGQKILVAVSDAVVSEAAVQLAKHLGLEAFVTTESQDRTPLIGTKEDYGISDDHIFYSRDPTYVKEITRLTNGAGVDCVLSSVSGEALKHATSCLAPFGTFVDLGAKDVRSSAILDKHPEAMFAAINLERISELRPDMAGRIMDGTFALLREGAIKPVKLLAAYPASDLETAMQALHARSRQDKIVIAYSADQVVPVLHNPRESLRLPGDKTYLIAGGLGGIGRNIANLLVECGARHLAFVSRSGVTSEAQQKLVDNLTQRGAKIAVYRCNIGDAQSLEQTLARCSAEMPPVKGVIHSAVVFRDAVIHNMTYAQWHELMESKLGGSWNLHALTTSYDLDFFLCIGSFMAIIGGLSQSNYAAGGAFQDGLAHMRQSMGLPAATIDLGIVKGFGAVEEQGAVGHTLEWREPFGVDEDAVFALIKKALLGQMDKDGPGVPPQMINTVPTGGMVRESGVGQPYYFEDPRFAIMAAIGTRNADGADGQASVALKEQLAQAESPEEAARLVSAAVAAKVAKLMQVGAEEIDAGKPLHAYGVDSLVAIEYVHWAKKEVAAEITVFDVMASVPISAFASDLAKKGEWGTTAATTKQ.

A Ketosynthase family 3 (KS3) domain is found at 7–435; that stretch reads SQSIAIVGLS…GSNAHAILDD (429 aa). Active-site for beta-ketoacyl synthase activity residues include Cys-181, His-316, and His-358. A compositionally biased stretch (basic residues) spans 450–459; it reads GKSHHHHHQH. Disordered stretches follow at residues 450–490 and 537–557; these read GKSH…NGTT and AEKQ…DPEK. The span at 474–490 shows a compositional bias: low complexity; that stretch reads VNGTSEVNGTSGVNGTT. Positions 611–915 constitute a Malonyl-CoA:ACP transacylase (MAT) domain; sequence YVFTGQGAQW…RGPVTQILQS (305 aa). The segment at 1008–1151 is N-terminal hotdog fold; it reads LGLIGAPMPN…GSVAVEFGAL (144 aa). Residues 1008-1325 form the PKS/mFAS DH domain; the sequence is LGLIGAPMPN…CVEMPSASGM (318 aa). The interval 1009–1323 is dehydratase (DH) domain; it reads GLIGAPMPNF…LVCVEMPSAS (315 aa). Residues 1169 to 1325 form a C-terminal hotdog fold region; that stretch reads TISQEVDVFY…CVEMPSASGM (157 aa). Residues 1886-2197 enclose the Enoyl reductase (ER) domain; it reads GMLNTLCFEI…ARSRQDKIVI (312 aa). Residues 2222 to 2399 form the Ketoreductase (KR) domain; that stretch reads TYLIAGGLGG…AATIDLGIVK (178 aa). Residues 2510 to 2587 form the Carrier domain; the sequence is EAARLVSAAV…AFASDLAKKG (78 aa). Ser-2547 is modified (O-(pantetheine 4'-phosphoryl)serine).

Pantetheine 4'-phosphate is required as a cofactor.

It functions in the pathway secondary metabolite biosynthesis. Functionally, partially reducing polyketide synthase; part of the gene cluster that mediates the biosynthesis of menisporopsin A, a bioactive macrocyclic polylactone. The biosynthesis of menisporopsin A is performed by a reducing (man1) and a non-reducing (men2) polyketide synthase that catalyze the formation of each menisporopsin A subunits, while the esterification and cyclolactonization activities are probably peformed by the unusual thioesterase domain of men2. First, a reduced diketide intermediate, 3-hydroxybutyryl-S-ACP is produced by men1 and transferred to men2; this is followed by a second reduced diketide which is further elongated using 3 units of malonyl-coA to form a reduced pentaketide. The cyclization of this intermediate by the PT domain forms the second subunit, 2,4-dihydroxy-6-(2-hydroxy-n-propyl)benzoyl-S-ACP. The TE domain of men2 then esterifies the secondary hydroxyl group on the side chain of the second subunit with the acyl-TE of the first subunit to form the first ester intermediate. This process occurs iteratively to form a linear tetraester intermediate. The final subunit is formed by a similar process, except that an extra malonyl-CoA is required in an additional elongation step to form a reduced hexaketide intermediate, and the carbonyl group next to the secondary hydroxyl group is reduced by a trans-acting ketoreductase. Again, the PT domain catalyzes cyclization to form the largest subunit, 2,4-dihydroxy-6-(2,4-dihydroxy-n-pentyl) benzoyl-S-ACP. Then the linear pentaester intermediate is formed. In this step, if the intermediate transfer rate is slow, intra- molecular cyclization involving the secondary hydroxyl group of the pentaester intermediate may occur to form menisporopsin B. Alternatively, transfer of the pentaester intermediate to the TE domain would allow cyclolactonization to be catalyzed by the TE to form menisporopsin A. This is Partially reducing polyketide synthase men1 from Menisporopsis theobromae.